The sequence spans 445 residues: Phosphoglucosamine mutase (445 aa).

S102 acts as the Phosphoserine intermediate in catalysis. Mg(2+)-binding residues include S102, D241, D243, and D245. S102 bears the Phosphoserine mark.

The protein belongs to the phosphohexose mutase family. Mg(2+) serves as cofactor. Activated by phosphorylation.

It carries out the reaction alpha-D-glucosamine 1-phosphate = D-glucosamine 6-phosphate. Functionally, catalyzes the conversion of glucosamine-6-phosphate to glucosamine-1-phosphate. In Salmonella dublin (strain CT_02021853), this protein is Phosphoglucosamine mutase.